Here is a 116-residue protein sequence, read N- to C-terminus: Large ribosomal subunit protein bL19 (116 aa).

Belongs to the bacterial ribosomal protein bL19 family.

Its function is as follows. This protein is located at the 30S-50S ribosomal subunit interface and may play a role in the structure and function of the aminoacyl-tRNA binding site. This chain is Large ribosomal subunit protein bL19, found in Pseudomonas fluorescens (strain Pf0-1).